A 298-amino-acid chain; its full sequence is uncharacterized protein (298 aa).

8 helical membrane-spanning segments follow: residues 5-25 (SLATLFALLILATLINRFLLW), 52-72 (VISGPRWMTLTFFALISFLAL), 105-125 (LFLLFIPLAGFLILATGQVLV), 138-158 (IFWGWIMTVFALSHAAWLLML), 163-183 (IQGGALLVLFLLALTESNDIA), 208-228 (GLMGGVITIMIASLIIGPLLT), 236-256 (LLAGLLIGISGFCGDVVMSAI), and 273-293 (GGLLDRIDSLIFTAPVFFYFI).

This sequence belongs to the CDS family.

It localises to the cell membrane. This is an uncharacterized protein from Escherichia coli (strain K12).